The chain runs to 352 residues: Protein Wnt-11 (352 aa).

The signal sequence occupies residues 1–22; it reads MKIYFLLGTFLTFLLHTRICQG. 2 N-linked (GlcNAc...) asparagine glycosylation sites follow: N38 and N88. 5 disulfide bridges follow: C78-C89, C128-C136, C138-C155, C207-C221, and C209-C216. S213 is lipidated: O-palmitoleoyl serine; by PORCN. A sulfotyrosine mark is found at Y273 and Y280. Disulfide bonds link C281/C312, C297/C307, C311/C351, C327/C342, C329/C339, and C334/C335. N298 carries N-linked (GlcNAc...) asparagine glycosylation.

Belongs to the Wnt family. Post-translationally, glycosylation is required for protein secretion. In terms of processing, palmitoleoylation is required for efficient binding to frizzled receptors. Depalmitoleoylation leads to Wnt signaling pathway inhibition. As to expression, in embryos, expressed in the neural tube, dorsal somite, mesenchymal cells within the dorsal fin, branchial arches and heart muscle, becoming expressed throughout the myocardium by the tadpole stage (stage 45). Prior to neural crest cell migration, expressed in a domain flanking the neural crest on the medial or neural (the opposite side to wnt11b). Weakly expressed in the developing pronephros from stage 25, with expression increasing from stages 30 to 35.

Its subcellular location is the secreted. The protein resides in the extracellular space. It is found in the extracellular matrix. Ligand for members of the frizzled family of seven transmembrane receptors. Shares much functionality with wnt11b. Signals through a non-canonical Wnt pathway to activate Jun-N-terminal kinase (JNK) to regulate gastrulation movements. Acts in a non-cell-autonomous manner to control neural crest migration, probably acting as an extracellular signal from surrounding tissue, but is not required for neural crest induction. Acts redundantly with wnt11b during pronephros induction. Regulates cardiac morphogenesis through the activation of JNK, but is not required for cardiac differentiation. Essential for dorsal fin development; required for an epithelial to mesenchymal transformation event prior to migration of cells into the fin, and ultimately for maintenance of fin structure. Mediates dorsal fin development through a non-canonical pathway mediated by Ca(2+). This Xenopus laevis (African clawed frog) protein is Protein Wnt-11.